Consider the following 314-residue polypeptide: Oxaloacetate tautomerase FAHD2B, mitochondrial (314 aa).

The transit peptide at 1-84 directs the protein to the mitochondrion; the sequence is MLGSSGRRLL…ATLSVVRRAL (84 aa). Glu159, Glu161, and Asp190 together coordinate Mg(2+). Position 203 is an N6-acetyllysine; alternate (Lys203). Lys203 is modified (N6-succinyllysine; alternate). Lys234 carries the post-translational modification N6-acetyllysine.

The protein belongs to the FAH family. Mg(2+) serves as cofactor. Mn(2+) is required as a cofactor.

The protein resides in the mitochondrion. It carries out the reaction oxaloacetate = enol-oxaloacetate. Tautomerase that converts enol-oxaloacetate, a strong inhibitor of succinate dehydrogenase, to the physiological keto form of oxaloacetate. It is thereby required to maximize aerobic respiration efficiency by preventing succinate dehydrogenase inhibition. The polypeptide is Oxaloacetate tautomerase FAHD2B, mitochondrial (Bos taurus (Bovine)).